The following is a 122-amino-acid chain: Immunoglobulin lambda variable 8-61 (122 aa).

The signal sequence occupies residues methionine 1–serine 24. The framework-1 stretch occupies residues glutamine 25 to serine 49. The 98-residue stretch at glutamine 25 to isoleucine 122 folds into the Ig-like domain. Cysteines 46 and 114 form a disulfide. The segment at serine 50–tyrosine 58 is complementarity-determining-1. The segment at proline 59–tyrosine 75 is framework-2. The segment at serine 76 to asparagine 78 is complementarity-determining-2. A framework-3 region spans residues threonine 79–cysteine 114. Residues valine 115 to isoleucine 122 are complementarity-determining-3.

As to quaternary structure, immunoglobulins are composed of two identical heavy chains and two identical light chains; disulfide-linked.

It is found in the secreted. Its subcellular location is the cell membrane. Functionally, v region of the variable domain of immunoglobulin light chains that participates in the antigen recognition. Immunoglobulins, also known as antibodies, are membrane-bound or secreted glycoproteins produced by B lymphocytes. In the recognition phase of humoral immunity, the membrane-bound immunoglobulins serve as receptors which, upon binding of a specific antigen, trigger the clonal expansion and differentiation of B lymphocytes into immunoglobulins-secreting plasma cells. Secreted immunoglobulins mediate the effector phase of humoral immunity, which results in the elimination of bound antigens. The antigen binding site is formed by the variable domain of one heavy chain, together with that of its associated light chain. Thus, each immunoglobulin has two antigen binding sites with remarkable affinity for a particular antigen. The variable domains are assembled by a process called V-(D)-J rearrangement and can then be subjected to somatic hypermutations which, after exposure to antigen and selection, allow affinity maturation for a particular antigen. This Homo sapiens (Human) protein is Immunoglobulin lambda variable 8-61.